Consider the following 180-residue polypeptide: Adenine phosphoribosyltransferase (180 aa).

It belongs to the purine/pyrimidine phosphoribosyltransferase family. In terms of assembly, homodimer.

The protein localises to the cytoplasm. The catalysed reaction is AMP + diphosphate = 5-phospho-alpha-D-ribose 1-diphosphate + adenine. Its pathway is purine metabolism; AMP biosynthesis via salvage pathway; AMP from adenine: step 1/1. Catalyzes a salvage reaction resulting in the formation of AMP, that is energically less costly than de novo synthesis. The sequence is that of Adenine phosphoribosyltransferase from Actinobacillus succinogenes (strain ATCC 55618 / DSM 22257 / CCUG 43843 / 130Z).